The primary structure comprises 271 residues: Mannosyl-3-phosphoglycerate phosphatase (271 aa).

Catalysis depends on aspartate 13, which acts as the Nucleophile. Residues aspartate 13, aspartate 15, and aspartate 214 each coordinate Mg(2+).

The protein belongs to the HAD-like hydrolase superfamily. MPGP family. Mg(2+) serves as cofactor.

Its subcellular location is the cytoplasm. The catalysed reaction is 2-O-(alpha-D-mannosyl)-3-phosphoglycerate + H2O = (2R)-2-O-(alpha-D-mannosyl)-glycerate + phosphate. The sequence is that of Mannosyl-3-phosphoglycerate phosphatase (yedP) from Escherichia coli O6:H1 (strain CFT073 / ATCC 700928 / UPEC).